Here is a 114-residue protein sequence, read N- to C-terminus: Large ribosomal subunit protein uL22 (114 aa).

It belongs to the universal ribosomal protein uL22 family. Part of the 50S ribosomal subunit.

In terms of biological role, this protein binds specifically to 23S rRNA; its binding is stimulated by other ribosomal proteins, e.g. L4, L17, and L20. It is important during the early stages of 50S assembly. It makes multiple contacts with different domains of the 23S rRNA in the assembled 50S subunit and ribosome. Its function is as follows. The globular domain of the protein is located near the polypeptide exit tunnel on the outside of the subunit, while an extended beta-hairpin is found that lines the wall of the exit tunnel in the center of the 70S ribosome. The sequence is that of Large ribosomal subunit protein uL22 from Ehrlichia chaffeensis (strain ATCC CRL-10679 / Arkansas).